The chain runs to 351 residues: uncharacterized protein (351 aa).

5 residues coordinate Mn(2+): Asp215, Asp226, His290, Glu319, and Glu333.

The protein belongs to the peptidase M24B family. Mn(2+) is required as a cofactor.

This is an uncharacterized protein from Staphylococcus aureus (strain USA300).